Reading from the N-terminus, the 260-residue chain is Thrombin-like enzyme acutobin (260 aa).

An N-terminal signal peptide occupies residues 1–18 (MVLIRVLANLLILQLSYA). A propeptide spanning residues 19 to 24 (QKSSEL) is cleaved from the precursor. One can recognise a Peptidase S1 domain in the interval 25–251 (VIGGVECDIN…YNDWIRSITA (227 aa)). Intrachain disulfides connect cysteine 31-cysteine 165, cysteine 52-cysteine 68, cysteine 102-cysteine 258, cysteine 144-cysteine 212, cysteine 176-cysteine 191, and cysteine 202-cysteine 227. Histidine 67 functions as the Charge relay system in the catalytic mechanism. N-linked (GlcNAc...) asparagine glycans are attached at residues asparagine 101 and asparagine 105. The active-site Charge relay system is aspartate 112. An N-linked (GlcNAc...) asparagine glycan is attached at asparagine 124. Residue serine 206 is the Charge relay system of the active site. Asparagine 253 carries N-linked (GlcNAc...) asparagine glycosylation.

Belongs to the peptidase S1 family. Snake venom subfamily. In terms of assembly, monomer. In terms of processing, N-glycosylated. Expressed by the venom gland.

Its subcellular location is the secreted. Thrombin-like snake venom serine protease that coagulates human fibrinogen by hydrolysis of the alpha chains (FGA). The sequence is that of Thrombin-like enzyme acutobin from Deinagkistrodon acutus (Hundred-pace snake).